Here is a 699-residue protein sequence, read N- to C-terminus: Elongation factor G (699 aa).

The 281-residue stretch at 8–288 (EDYRNFGIMA…AVVDYLPSPL (281 aa)) folds into the tr-type G domain. GTP-binding positions include 17–24 (AHIDAGKT), 86–90 (DTPGH), and 140–143 (NKMD).

It belongs to the TRAFAC class translation factor GTPase superfamily. Classic translation factor GTPase family. EF-G/EF-2 subfamily.

It is found in the cytoplasm. Catalyzes the GTP-dependent ribosomal translocation step during translation elongation. During this step, the ribosome changes from the pre-translocational (PRE) to the post-translocational (POST) state as the newly formed A-site-bound peptidyl-tRNA and P-site-bound deacylated tRNA move to the P and E sites, respectively. Catalyzes the coordinated movement of the two tRNA molecules, the mRNA and conformational changes in the ribosome. The chain is Elongation factor G from Rhizobium etli (strain CIAT 652).